Consider the following 345-residue polypeptide: Phosphoribosylformylglycinamidine cyclo-ligase (345 aa).

This sequence belongs to the AIR synthase family.

Its subcellular location is the cytoplasm. The enzyme catalyses 2-formamido-N(1)-(5-O-phospho-beta-D-ribosyl)acetamidine + ATP = 5-amino-1-(5-phospho-beta-D-ribosyl)imidazole + ADP + phosphate + H(+). It participates in purine metabolism; IMP biosynthesis via de novo pathway; 5-amino-1-(5-phospho-D-ribosyl)imidazole from N(2)-formyl-N(1)-(5-phospho-D-ribosyl)glycinamide: step 2/2. The chain is Phosphoribosylformylglycinamidine cyclo-ligase from Limosilactobacillus fermentum (strain NBRC 3956 / LMG 18251) (Lactobacillus fermentum).